The sequence spans 175 residues: MTKVNSQKYSKALLEVAQEKGQLEAILTEVSEMIQLFKENNLGAFLANEVYSFSAKSELIDTLLQTSSEVMSNFLNTIRSNGRLADLGEILEETKNAADDMFKIADVEVVSSIALSEAQIEKFKAMAKSKFDLNEVTVINTVNEKILGGFIVNSRGKIIDASLKTQLAKIAAEIL.

This sequence belongs to the ATPase delta chain family. As to quaternary structure, F-type ATPases have 2 components, F(1) - the catalytic core - and F(0) - the membrane proton channel. F(1) has five subunits: alpha(3), beta(3), gamma(1), delta(1), epsilon(1). F(0) has three main subunits: a(1), b(2) and c(10-14). The alpha and beta chains form an alternating ring which encloses part of the gamma chain. F(1) is attached to F(0) by a central stalk formed by the gamma and epsilon chains, while a peripheral stalk is formed by the delta and b chains.

It localises to the cell membrane. Its function is as follows. F(1)F(0) ATP synthase produces ATP from ADP in the presence of a proton or sodium gradient. F-type ATPases consist of two structural domains, F(1) containing the extramembraneous catalytic core and F(0) containing the membrane proton channel, linked together by a central stalk and a peripheral stalk. During catalysis, ATP synthesis in the catalytic domain of F(1) is coupled via a rotary mechanism of the central stalk subunits to proton translocation. This protein is part of the stalk that links CF(0) to CF(1). It either transmits conformational changes from CF(0) to CF(1) or is implicated in proton conduction. This is ATP synthase subunit delta from Lactococcus lactis subsp. cremoris (strain MG1363).